Consider the following 170-residue polypeptide: Photosystem II extrinsic protein V (170 aa).

The first 34 residues, 1–34 (MNKILGIDPLKKFIFGISAFVLLFWQLNVGAANA), serve as a signal peptide directing secretion. Positions 70, 73, 74, and 125 each coordinate heme c.

Belongs to the cytochrome c family. PsbV subfamily. PSII is composed of 1 copy each of membrane proteins PsbA, PsbB, PsbC, PsbD, PsbE, PsbF, PsbH, PsbI, PsbJ, PsbK, PsbL, PsbM, PsbT, PsbX, PsbY, PsbZ, Psb30/Ycf12, peripheral proteins PsbO, CyanoQ (PsbQ), PsbU, PsbV and a large number of cofactors. It forms dimeric complexes. The cofactor is heme c.

Its subcellular location is the cellular thylakoid membrane. In terms of biological role, one of the extrinsic, lumenal subunits of photosystem II (PSII). PSII is a light-driven water plastoquinone oxidoreductase, using light energy to abstract electrons from H(2)O, generating a proton gradient subsequently used for ATP formation. The extrinsic proteins stabilize the structure of photosystem II oxygen-evolving complex (OEC), the ion environment of oxygen evolution and protect the OEC against heat-induced inactivation. Low-potential cytochrome c that plays a role in the OEC of PSII. The sequence is that of Photosystem II extrinsic protein V from Picosynechococcus sp. (strain ATCC 27264 / PCC 7002 / PR-6) (Agmenellum quadruplicatum).